The chain runs to 129 residues: Large ribosomal subunit protein bL12 (129 aa).

Belongs to the bacterial ribosomal protein bL12 family. As to quaternary structure, homodimer. Part of the ribosomal stalk of the 50S ribosomal subunit. Forms a multimeric L10(L12)X complex, where L10 forms an elongated spine to which 2 to 4 L12 dimers bind in a sequential fashion. Binds GTP-bound translation factors.

Forms part of the ribosomal stalk which helps the ribosome interact with GTP-bound translation factors. Is thus essential for accurate translation. The sequence is that of Large ribosomal subunit protein bL12 from Maridesulfovibrio salexigens (strain ATCC 14822 / DSM 2638 / NCIMB 8403 / VKM B-1763) (Desulfovibrio salexigens).